We begin with the raw amino-acid sequence, 88 residues long: MFENIDKGTIVRTLLLAIALLNQIMVMLGKAAFIINEEDINHLYDCLYTIFTIVFTTSTTTAAWFKNNYITAKGKKQKQVLKKENLFK.

2 helical membrane passes run 15-35 (LLAI…AFII) and 45-65 (DCLY…AAWF).

The protein belongs to the SPP1 holin family.

The protein localises to the cell membrane. May be involved in the secretion of the autolysin BlyA. The protein is SPbeta prophage-derived protein BhlB (bhlB) of Bacillus subtilis (strain 168).